Here is a 1129-residue protein sequence, read N- to C-terminus: Phospholipid-transporting ATPase 11C (1129 aa).

At Met-1–Asp-83 the chain is on the cytoplasmic side. A helical transmembrane segment spans residues Thr-84–Ile-104. Topologically, residues Lys-105 to Ser-287 are extracellular. Residues Ile-288–Thr-308 form a helical membrane-spanning segment. Over Leu-309–Asp-343 the chain is Cytoplasmic. A helical membrane pass occupies residues Phe-344–Glu-364. Over Met-365–Tyr-876 the chain is Extracellular. Asp-409 serves as the catalytic 4-aspartylphosphate intermediate. The ATP site is built by Asp-409, Lys-410, and Thr-411. Residue Asp-409 coordinates Mg(2+). Mg(2+) is bound at residue Thr-411. At Ser-442 the chain carries Phosphoserine. Residues Glu-498, Phe-540, Lys-563, and Arg-594 each contribute to the ATP site. Positions Asp-607–Ile-643 form a coiled coil. Residues Thr-674, Gly-675, and Asp-676 each coordinate ATP. Residues Thr-695–Leu-726 adopt a coiled-coil conformation. 2 residues coordinate ATP: Arg-789 and Lys-795. A Mg(2+)-binding site is contributed by Asp-816. ATP contacts are provided by Asn-819 and Asp-820. Residue Asp-820 participates in Mg(2+) binding. Residues Phe-877–Phe-897 traverse the membrane as a helical segment. Over Ser-898–Ala-905 the chain is Cytoplasmic. The chain crosses the membrane as a helical span at residues Ala-906–Leu-926. The Extracellular segment spans residues Glu-927–Gln-952. A helical transmembrane segment spans residues Leu-953 to Gly-973. At Thr-974–Lys-988 the chain is on the cytoplasmic side. The helical transmembrane segment at Ile-989–Leu-1009 threads the bilayer. The Extracellular portion of the chain corresponds to Lys-1010–His-1023. A helical transmembrane segment spans residues Phe-1024–Ile-1044. Residues Trp-1045–Thr-1066 lie on the Cytoplasmic side of the membrane. The helical transmembrane segment at Trp-1067 to Val-1087 threads the bilayer. The Extracellular portion of the chain corresponds to Lys-1088 to Leu-1129. 3 positions are modified to phosphoserine: Ser-1105, Ser-1113, and Ser-1123. The Di-leucine motif signature appears at Ser-1113–Leu-1118.

It belongs to the cation transport ATPase (P-type) (TC 3.A.3) family. Type IV subfamily. As to quaternary structure, component of a P4-ATPase flippase complex which consists of a catalytic alpha subunit ATP11C and an accessory beta subunit TMEM30A. Mg(2+) is required as a cofactor. Proteolytically cleaved by CASP3, CASP6 and CASP7. Post-translationally, phosphorylated at Ser-1113 likely by PRKCA; this creates a functional di-leucine motif that is sufficient for endocytosis. As to expression, widely expressed. Expressed in retina, brain, liver and testes (at protein level). Expressed in lung, bone marrow, lymph nodes, prostate, ovary and uterus. Expressed in fetus.

It localises to the cell membrane. The protein localises to the endoplasmic reticulum membrane. Its subcellular location is the early endosome membrane. The protein resides in the recycling endosome membrane. The catalysed reaction is ATP + H2O + phospholipidSide 1 = ADP + phosphate + phospholipidSide 2.. It catalyses the reaction a 1,2-diacyl-sn-glycero-3-phospho-L-serine(out) + ATP + H2O = a 1,2-diacyl-sn-glycero-3-phospho-L-serine(in) + ADP + phosphate + H(+). The enzyme catalyses a 1,2-diacyl-sn-glycero-3-phosphoethanolamine(out) + ATP + H2O = a 1,2-diacyl-sn-glycero-3-phosphoethanolamine(in) + ADP + phosphate + H(+). Functionally, catalytic component of a P4-ATPase flippase complex which catalyzes the hydrolysis of ATP coupled to the transport of aminophospholipids, phosphatidylserines (PS) and phosphatidylethanolamines (PE), from the outer to the inner leaflet of the plasma membrane. Major PS-flippase in immune cell subsets. In erythrocyte plasma membrane, it is required to maintain PS in the inner leaflet preventing its exposure on the surface. This asymmetric distribution is critical for the survival of erythrocytes in circulation since externalized PS is a phagocytic signal for erythrocyte clearance by splenic macrophages. Required for B cell differentiation past the pro-B cell stage. Seems to mediate PS flipping in pro-B cells. May be involved in the transport of cholestatic bile acids. In Mus musculus (Mouse), this protein is Phospholipid-transporting ATPase 11C.